Reading from the N-terminus, the 441-residue chain is GTPase Der (441 aa).

EngA-type G domains are found at residues 4–169 (PIVA…PEGS) and 178–353 (PKVA…DAQT). Residues 10–17 (GRPNVGKS), 57–61 (DTGGI), 120–123 (NKVD), 184–191 (GKPNVGKS), 231–235 (DTAGL), and 296–299 (NKWD) each bind GTP. Positions 354–438 (MRIPTGVLNE…SIRFINRERK (85 aa)) constitute a KH-like domain.

It belongs to the TRAFAC class TrmE-Era-EngA-EngB-Septin-like GTPase superfamily. EngA (Der) GTPase family. In terms of assembly, associates with the 50S ribosomal subunit.

GTPase that plays an essential role in the late steps of ribosome biogenesis. The polypeptide is GTPase Der (Lachnospira eligens (strain ATCC 27750 / DSM 3376 / VPI C15-48 / C15-B4) (Eubacterium eligens)).